Reading from the N-terminus, the 244-residue chain is 1-(5-phosphoribosyl)-5-[(5-phosphoribosylamino)methylideneamino] imidazole-4-carboxamide isomerase (244 aa).

The active-site Proton acceptor is the Asp-11. Residue Asp-132 is the Proton donor of the active site.

Belongs to the HisA/HisF family.

The protein resides in the cytoplasm. The catalysed reaction is 1-(5-phospho-beta-D-ribosyl)-5-[(5-phospho-beta-D-ribosylamino)methylideneamino]imidazole-4-carboxamide = 5-[(5-phospho-1-deoxy-D-ribulos-1-ylimino)methylamino]-1-(5-phospho-beta-D-ribosyl)imidazole-4-carboxamide. It functions in the pathway amino-acid biosynthesis; L-histidine biosynthesis; L-histidine from 5-phospho-alpha-D-ribose 1-diphosphate: step 4/9. The protein is 1-(5-phosphoribosyl)-5-[(5-phosphoribosylamino)methylideneamino] imidazole-4-carboxamide isomerase of Sphingopyxis alaskensis (strain DSM 13593 / LMG 18877 / RB2256) (Sphingomonas alaskensis).